The sequence spans 88 residues: Small ribosomal subunit protein uS17 (88 aa).

It belongs to the universal ribosomal protein uS17 family. As to quaternary structure, part of the 30S ribosomal subunit.

Functionally, one of the primary rRNA binding proteins, it binds specifically to the 5'-end of 16S ribosomal RNA. The protein is Small ribosomal subunit protein uS17 of Ectopseudomonas mendocina (strain ymp) (Pseudomonas mendocina).